An 84-amino-acid chain; its full sequence is Small ribosomal subunit protein uS17 (84 aa).

The protein belongs to the universal ribosomal protein uS17 family. As to quaternary structure, part of the 30S ribosomal subunit.

One of the primary rRNA binding proteins, it binds specifically to the 5'-end of 16S ribosomal RNA. The protein is Small ribosomal subunit protein uS17 of Glaesserella parasuis serovar 5 (strain SH0165) (Haemophilus parasuis).